Consider the following 90-residue polypeptide: Translation initiation factor IF-1 (90 aa).

In terms of domain architecture, S1-like spans 7 to 76; sequence KEDVIRMEGT…TRGRIVYRKK (70 aa).

This sequence belongs to the IF-1 family. In terms of assembly, component of the 30S ribosomal translation pre-initiation complex which assembles on the 30S ribosome in the order IF-2 and IF-3, IF-1 and N-formylmethionyl-tRNA(fMet); mRNA recruitment can occur at any time during PIC assembly.

Its subcellular location is the cytoplasm. Its function is as follows. One of the essential components for the initiation of protein synthesis. Stabilizes the binding of IF-2 and IF-3 on the 30S subunit to which N-formylmethionyl-tRNA(fMet) subsequently binds. Helps modulate mRNA selection, yielding the 30S pre-initiation complex (PIC). Upon addition of the 50S ribosomal subunit IF-1, IF-2 and IF-3 are released leaving the mature 70S translation initiation complex. This chain is Translation initiation factor IF-1, found in Fervidobacterium nodosum (strain ATCC 35602 / DSM 5306 / Rt17-B1).